Reading from the N-terminus, the 355-residue chain is Guanine nucleotide-binding protein G(z) subunit alpha (355 aa).

Residues 1–14 (MGCRQSSEEKEAAR) show a composition bias toward basic and acidic residues. A disordered region spans residues 1 to 26 (MGCRQSSEEKEAARRSRRIDRHLRSE). Gly2 carries N-myristoyl glycine lipidation. The S-palmitoyl cysteine moiety is linked to residue Cys3. The G-alpha domain maps to 32–355 (REIKLLLLGT…QNNLKYIGLC (324 aa)). The G1 motif stretch occupies residues 35–48 (KLLLLGTSNSGKST). Residues 40–47 (GTSNSGKS), 176–182 (LRSRDMT), 201–205 (DVGGQ), 270–273 (NKKD), and Ala327 contribute to the GTP site. Ser47 serves as a coordination point for Mg(2+). Residues 174 to 182 (DILRSRDMT) are G2 motif. Arg179 bears the ADP-ribosylarginine; by cholera toxin mark. Thr182 is a binding site for Mg(2+). A G3 motif region spans residues 197 to 206 (FKMVDVGGQR). The interval 266 to 273 (ILFLNKKD) is G4 motif. Residues 325 to 330 (TCATDT) are G5 motif.

This sequence belongs to the G-alpha family. G(i/o/t/z) subfamily. As to quaternary structure, G-proteins are composed of 3 units; alpha, beta and gamma. The alpha chain contains the guanine nucleotide binding site. Interacts with ADGRB2.

Its subcellular location is the membrane. Functionally, guanine nucleotide-binding proteins (G proteins) are involved as modulators or transducers in various transmembrane signaling systems. The protein is Guanine nucleotide-binding protein G(z) subunit alpha (GNAZ) of Homo sapiens (Human).